Reading from the N-terminus, the 413-residue chain is Multifunctional CCA protein (413 aa).

Residues Gly8 and Arg11 each coordinate ATP. The CTP site is built by Gly8 and Arg11. Mg(2+) contacts are provided by Asp21 and Asp23. 3 residues coordinate ATP: Arg91, Arg143, and Arg146. 3 residues coordinate CTP: Arg91, Arg143, and Arg146. Positions 232–333 (TGVHVMMVVD…VRLFERSDAL (102 aa)) constitute an HD domain.

This sequence belongs to the tRNA nucleotidyltransferase/poly(A) polymerase family. Bacterial CCA-adding enzyme type 1 subfamily. Monomer. Can also form homodimers and oligomers. Mg(2+) is required as a cofactor. Requires Ni(2+) as cofactor.

It catalyses the reaction a tRNA precursor + 2 CTP + ATP = a tRNA with a 3' CCA end + 3 diphosphate. It carries out the reaction a tRNA with a 3' CCA end + 2 CTP + ATP = a tRNA with a 3' CCACCA end + 3 diphosphate. In terms of biological role, catalyzes the addition and repair of the essential 3'-terminal CCA sequence in tRNAs without using a nucleic acid template. Adds these three nucleotides in the order of C, C, and A to the tRNA nucleotide-73, using CTP and ATP as substrates and producing inorganic pyrophosphate. tRNA 3'-terminal CCA addition is required both for tRNA processing and repair. Also involved in tRNA surveillance by mediating tandem CCA addition to generate a CCACCA at the 3' terminus of unstable tRNAs. While stable tRNAs receive only 3'-terminal CCA, unstable tRNAs are marked with CCACCA and rapidly degraded. The protein is Multifunctional CCA protein of Burkholderia cenocepacia (strain HI2424).